The sequence spans 354 residues: Rhodopsin (354 aa).

Topologically, residues 1–36 (MNGTEGENFYIPMSNKTGVVRSPFDYPQYYLAEPWK) are extracellular. 2 N-linked (GlcNAc...) asparagine glycosylation sites follow: N2 and N15. Residues 37 to 61 (FSVLAAYMFFLIIAGFPVNFLTLYV) form a helical membrane-spanning segment. At 62 to 73 (TIQHKKLRQPLN) the chain is on the cytoplasmic side. The chain crosses the membrane as a helical span at residues 74–96 (YILLNLAVADLFMIFGGFPSTMI). At 97-110 (TSMNGYFVFGPSGC) the chain is on the extracellular side. Cysteines 110 and 187 form a disulfide. A helical membrane pass occupies residues 111–133 (NFEGFFATLGGEIGLWSLVVLAI). The 'Ionic lock' involved in activated form stabilization signature appears at 134-136 (ERY). Residues 134–152 (ERYVVVCKPMSNFRFGSQH) are Cytoplasmic-facing. A helical transmembrane segment spans residues 153–173 (AFMGVGLTWIMAMACAFPPLV). Residues 174–202 (GWSRYIPEGMQCSCGIDYYTLKPEVNNES) are Extracellular-facing. N200 carries N-linked (GlcNAc...) asparagine glycosylation. A helical membrane pass occupies residues 203-224 (FVIYMFVVHFSIPLTIIFFCYG). The Cytoplasmic segment spans residues 225–252 (RLVCTVKEAAAQQQESETTQRAEREVTR). The helical transmembrane segment at 253 to 274 (MVIIMVIAFLICWLPYASVAFF) threads the bilayer. The Extracellular segment spans residues 275-286 (IFCNQGSEFGPI). Residues 287 to 308 (FMTIPAFFAKAASLYNPLIYIL) form a helical membrane-spanning segment. K296 is subject to N6-(retinylidene)lysine. Topologically, residues 309–354 (MNKQFRNCMITTICCGKNPFEEEESTSASASKTEASSVSSSQVAPA) are cytoplasmic. Residues C322 and C323 are each lipidated (S-palmitoyl cysteine). Residues 333–354 (STSASASKTEASSVSSSQVAPA) are disordered. Positions 334–354 (TSASASKTEASSVSSSQVAPA) are enriched in low complexity.

Belongs to the G-protein coupled receptor 1 family. Opsin subfamily. In terms of processing, phosphorylated on some or all of the serine and threonine residues present in the C-terminal region. Post-translationally, contains one covalently linked retinal chromophore.

The protein resides in the membrane. The protein localises to the cell projection. It localises to the cilium. It is found in the photoreceptor outer segment. In terms of biological role, photoreceptor required for image-forming vision at low light intensity. While most salt water fish species use retinal as chromophore, most freshwater fish use 3-dehydroretinal, or a mixture of retinal and 3-dehydroretinal. Light-induced isomerization of 11-cis to all-trans retinal triggers a conformational change that activates signaling via G-proteins. Subsequent receptor phosphorylation mediates displacement of the bound G-protein alpha subunit by arrestin and terminates signaling. This chain is Rhodopsin (rho), found in Scyliorhinus canicula (Small-spotted catshark).